The following is a 762-amino-acid chain: uncharacterized protein (762 aa).

The segment at 1–26 (MENLKSASPEEDSPRHGDNMGKPKRI) is disordered. Residues 12-21 (DSPRHGDNMG) are compositionally biased toward basic and acidic residues. Residues 30–57 (CDMCRKRKIRCDGKQPACSNCVSHGIPC) constitute a DNA-binding region (zn(2)-C6 fungal-type). Residues 647 to 668 (QSHVPPRISSNHSDTSVKSNSP) form a disordered region.

Its subcellular location is the nucleus. This is an uncharacterized protein from Schizosaccharomyces pombe (strain 972 / ATCC 24843) (Fission yeast).